The chain runs to 898 residues: Phosphoenolpyruvate carboxylase (898 aa).

Active-site residues include histidine 138 and lysine 561.

This sequence belongs to the PEPCase type 1 family. Mg(2+) serves as cofactor.

The catalysed reaction is oxaloacetate + phosphate = phosphoenolpyruvate + hydrogencarbonate. Functionally, forms oxaloacetate, a four-carbon dicarboxylic acid source for the tricarboxylic acid cycle. This is Phosphoenolpyruvate carboxylase from Streptococcus pneumoniae serotype 2 (strain D39 / NCTC 7466).